Reading from the N-terminus, the 215-residue chain is MQAFTVHKGLVAPMDRANVDTDAIIPKQFLKSIQRSGFGPNLFDEWRYLDKGEPGQESVVRKPNPDFVLNQPRYQGASILLTRENFGCGSSREHAPWALGQYGFRVLIAPSFADIFFNNCFKNGILPIVLPESVVARLFDEVHGFVGYQLTIDLPRQVVIKADGTELPFEVQAFRKYCLVNGFDDIGLTLRHADKIKAFEAERLAKMPWLGQRLL.

Belongs to the LeuD family. LeuD type 1 subfamily. In terms of assembly, heterodimer of LeuC and LeuD.

It catalyses the reaction (2R,3S)-3-isopropylmalate = (2S)-2-isopropylmalate. Its pathway is amino-acid biosynthesis; L-leucine biosynthesis; L-leucine from 3-methyl-2-oxobutanoate: step 2/4. Functionally, catalyzes the isomerization between 2-isopropylmalate and 3-isopropylmalate, via the formation of 2-isopropylmaleate. The polypeptide is 3-isopropylmalate dehydratase small subunit (Leptothrix cholodnii (strain ATCC 51168 / LMG 8142 / SP-6) (Leptothrix discophora (strain SP-6))).